Consider the following 326-residue polypeptide: Pancreas transcription factor 1 subunit alpha (326 aa).

The 53-residue stretch at 162–214 (QLRQAANVRERRRMQSINDAFEGLRSHIPTLPYEKRLSKVDTLRLAIGYINFL) folds into the bHLH domain. Over residues 229-240 (TGGCGGPGGSRH) the composition is skewed to gly residues. 2 disordered regions span residues 229-249 (TGGC…PGNQ) and 304-326 (DPRK…EFVS).

In terms of assembly, component of the pancreas transcription factor 1 complex (PTF1) which is composed of TCF3/p75, TCF12/p64 and PTF1A/p48. TCF3 is responsible for the nuclear import of the p48/p64 complex. Interacts with TCF3 and RBPSUH/RBP-Jkappa. As to expression, exocrine pancreas-specific. Expressed in azaserine-induced pancreatic tumors (at protein level). Expressed in AR42J cells but not in ARIP, DSL6A, or DSL6B cells. Down-regulation is associated with the change of an azaserine-induced acinar cell carcinoma to a ductal phenotype.

Its subcellular location is the nucleus. The protein localises to the cytoplasm. Its function is as follows. Transcription factor implicated in the cell fate determination in various organs. Binds to the E-box consensus sequence 5'-CANNTG-3'. Plays a role in early and late pancreas development and differentiation. Important for determining whether cells allocated to the pancreatic buds continue towards pancreatic organogenesis or revert back to duodenal fates. May be involved in the maintenance of exocrine pancreas-specific gene expression including ELA1 and amylase. Required for the formation of pancreatic acinar and ductal cells. Plays an important role in cerebellar development. Directly regulated by FOXN4 and RORC during retinal development, FOXN4-PTF1A pathway plays a central role in directing the differentiation of retinal progenitors towards horizontal and amacrine fates. This is Pancreas transcription factor 1 subunit alpha (Ptf1a) from Rattus norvegicus (Rat).